Here is a 374-residue protein sequence, read N- to C-terminus: Translocating chain-associated membrane protein 1 (374 aa).

At 2-29 the chain is on the cytoplasmic side; sequence AIRKKSTKSPPVLSHEFILQNHADIVSC. The helical transmembrane segment at 30–50 threads the bilayer; that stretch reads VAMVFLLGLMFEITAKASIIF. Residues 51–76 lie on the Lumenal side of the membrane; it reads VTLQYNVTLPATEEQATESTSLYYYG. Asn56 carries an N-linked (GlcNAc...) asparagine glycan. Residues 77 to 97 form a helical membrane-spanning segment; it reads IKDLATVFFYMLVAIIIHAII. Topologically, residues 98-121 are cytoplasmic; it reads QEYVLDKINRRMHFSKTKHSKFNE. The region spanning 117 to 326 is the TLC domain; sequence SKFNESGQLS…NFQLRRWREH (210 aa). The helical transmembrane segment at 122–142 threads the bilayer; the sequence is SGQLSAFYLFSCIWGTFILIS. Residues 143–159 are Lumenal-facing; sequence ENYISDPTILWRAYPHN. A helical membrane pass occupies residues 160 to 180; sequence LMTFQMKFFYIAQLAYWFHAF. The Cytoplasmic portion of the chain corresponds to 181–192; it reads PELYFQKTKKED. A helical membrane pass occupies residues 193–213; the sequence is IPRQLVYIGLYLFHIAGAYLL. Residues 214 to 217 lie on the Lumenal side of the membrane; the sequence is NLNH. The chain crosses the membrane as a helical span at residues 218 to 238; it reads LGLVLLVLHYFVEFLFHISRL. Residues 239–251 are Cytoplasmic-facing; it reads FYFSDEKYQKGFS. Residues 252-272 form a helical membrane-spanning segment; that stretch reads LWAVLFVLGRLLTLILSVLTV. Residues 273 to 297 lie on the Lumenal side of the membrane; that stretch reads GFGLARAENQKLDFSAGNFNVLAVR. Residues 298-318 form a helical membrane-spanning segment; the sequence is IAVLASICITQAFMMWKFINF. Topologically, residues 319-374 are cytoplasmic; the sequence is QLRRWREHSTFQAPVVKKKPTVTKGRSSRKGTENGVNGTVTSNGADSPRNRKEKSS. Residues 334-347 are compositionally biased toward basic residues; the sequence is VKKKPTVTKGRSSR. Residues 334–374 are disordered; the sequence is VKKKPTVTKGRSSRKGTENGVNGTVTSNGADSPRNRKEKSS. The segment covering 352–363 has biased composition (polar residues); the sequence is NGVNGTVTSNGA. Position 365 is a phosphoserine (Ser365).

Belongs to the TRAM family. Interacts with SEC61B. May interact with Derlin-1/DERL1. In terms of processing, N-glycosylated.

The protein resides in the endoplasmic reticulum membrane. In terms of biological role, involved in the translocation of nascent protein chains into or through the endoplasmic reticulum (ER) membrane by facilitating the proper chain positioning at the SEC61 channel. Regulates the exposure of nascent secretory protein chain to the cytosol during translocation into the ER. May affect the phospholipid bilayer in the vicinity of the lateral gate of the SEC61 channel, thereby facilitating ER protein transport. Intimately associates with transmembrane (TM) domain of nascent membrane proteins during the entire integration process into the ER membrane. Associates with the second TM domain of G-protein-coupled receptor opsin/OPSD nascent chain in the ER membrane, which may facilitate its integration into the membrane. Under conditions of ER stress, participates in the disposal of misfolded ER membrane proteins during the unfolded protein response (UPR), an integrated stress response (ISR) pathway, by selectively retrotranslocating misfolded ER-membrane proteins from the ER into the cytosol where they are ubiquitinated and degraded by the proteasome. In Canis lupus familiaris (Dog), this protein is Translocating chain-associated membrane protein 1 (TRAM1).